The primary structure comprises 343 residues: MEQHQGQAGMDLPPGFRFHPTDEELITHYLAKKVADARFAALAVAEADLNKCEPWDLPSLAKMGEKEWYFFCLKDRKYPTGLRTNRATESGYWKATGKDKDIFRRKALVGMKKTLVFYTGRAPKGEKSGWVMHEYRLHGKLHAAALGFLHGKPASSKNEWVLCRVFKKSLVEVGAAGGKKAAVVTMEMARGGSTSSSVADEIAMSSVVLPPLMDMSGAGAGAVDPATTAHVTCFSNALEGQFFNPTAVHGHGGGDSSPFMASFTQYGQLHHGVSLVQLLESCNGYGGLVDMAASGSQLQPAACGGERERLSASQDTGLTSDVNPEISSSSGQKFDHEAALWGY.

Residues 12–168 (LPPGFRFHPT…EWVLCRVFKK (157 aa)) enclose the NAC domain. A DNA-binding region spans residues 109 to 174 (VGMKKTLVFY…VFKKSLVEVG (66 aa)). The disordered stretch occupies residues 304–333 (GGERERLSASQDTGLTSDVNPEISSSSGQK). Residues 311 to 332 (SASQDTGLTSDVNPEISSSSGQ) are compositionally biased toward polar residues.

Expressed in roots, tiller buds, stems, leaves, lamina joints and the young husks. Expressed in embryos, coleoptiles, radicles, leaf pulvinus, ligules, panicles, palea and lemma, anthers, and the internode of the peduncles. Expressed in young leaves, root meristems, florescence meristems and young spikelets.

The protein resides in the nucleus. Its function is as follows. Transcription factor involved in the regulation of tiller bud outgrowth, but does not seem to regulate tiller bud initiation. Possesses transactivation activity in yeast. Involved in the regulation of plant architecture and grain yield. Acts as a negative regulator of plant height and flowering time. Regulates directly key genes of the gibberellin (GA) pathway by binding to their promoters. Positively regulates leaf senescence in an age-dependent manner. Activates directly the expression of the chlorophyll degradation genes SGR and NYC3. Positively regulates the level of abscisic acid (ABA) by directly up-regulating the expression of the ABA biosynthetic genes NCED3 and ZEP, and down-regulating the ABA catabolic gene CYP707A5/ABA8OX1. Promotes salt-induced cell death accompanied by the loss of plasma membrane integrity, nuclear DNA fragmentation, and changes of caspase-like activity. Targets genes that encoded a reactive oxygen species (ROS) scavenger COX11 and a caspase-like protease AP37. Activates the potassium efflux channels GORK and SKOR. Acts as a positive regulator of drought and salt tolerance through ABA-mediated pathways. Acts as a negative regulator of root growth. Functions as an upstream integrator of auxin and cytokinin signals that affect CROWN ROOTLESS (CRL) and cyclin-dependent protein kinase (CDK) genes to regulate cell division during root development. Binds directly to the promoters of the auxin inactivation-related genes GH3.6 and GH3.8, the auxin signaling-related gene ARF25, and the cytokinin oxidase gene CKX4. Activates directly the expressions of the 1-aminocyclopropane-1-carboxylate oxidase genes ACO1 and ACO3, enhancing ethylene synthesis, and then retarding seedling establishment. In Oryza sativa subsp. japonica (Rice), this protein is NAC domain-containing protein 4.